The following is a 124-amino-acid chain: UPF0231 protein Sbal223_3655 (124 aa).

It belongs to the UPF0231 family.

This Shewanella baltica (strain OS223) protein is UPF0231 protein Sbal223_3655.